The sequence spans 245 residues: 1-(5-phosphoribosyl)-5-[(5-phosphoribosylamino)methylideneamino] imidazole-4-carboxamide isomerase (245 aa).

The active-site Proton acceptor is the D7. D129 acts as the Proton donor in catalysis.

This sequence belongs to the HisA/HisF family.

The protein localises to the cytoplasm. It carries out the reaction 1-(5-phospho-beta-D-ribosyl)-5-[(5-phospho-beta-D-ribosylamino)methylideneamino]imidazole-4-carboxamide = 5-[(5-phospho-1-deoxy-D-ribulos-1-ylimino)methylamino]-1-(5-phospho-beta-D-ribosyl)imidazole-4-carboxamide. It participates in amino-acid biosynthesis; L-histidine biosynthesis; L-histidine from 5-phospho-alpha-D-ribose 1-diphosphate: step 4/9. This is 1-(5-phosphoribosyl)-5-[(5-phosphoribosylamino)methylideneamino] imidazole-4-carboxamide isomerase from Escherichia fergusonii (strain ATCC 35469 / DSM 13698 / CCUG 18766 / IAM 14443 / JCM 21226 / LMG 7866 / NBRC 102419 / NCTC 12128 / CDC 0568-73).